We begin with the raw amino-acid sequence, 506 residues long: Galactose/methyl galactoside import ATP-binding protein MglA (506 aa).

ABC transporter domains follow at residues 14–249 (LEMK…VGRS) and 264–506 (VMLE…SLYL). 46 to 53 (GENGAGKS) contacts ATP.

This sequence belongs to the ABC transporter superfamily. Galactose/methyl galactoside importer (TC 3.A.1.2.3) family. The complex is composed of one ATP-binding protein (MglA), two transmembrane proteins (MglC) and a solute-binding protein (MglB).

Its subcellular location is the cell inner membrane. It catalyses the reaction D-galactose(out) + ATP + H2O = D-galactose(in) + ADP + phosphate + H(+). The catalysed reaction is methyl beta-D-galactoside(out) + ATP + H2O = methyl beta-D-galactoside(in) + ADP + phosphate + H(+). Part of the ABC transporter complex MglABC involved in galactose/methyl galactoside import. Responsible for energy coupling to the transport system. The protein is Galactose/methyl galactoside import ATP-binding protein MglA of Sodalis glossinidius (strain morsitans).